We begin with the raw amino-acid sequence, 211 residues long: Peptidyl-prolyl cis-trans isomerase-like 3 (211 aa).

The 204-residue stretch at 1–204 folds into the PPIase cyclophilin-type domain; sequence MSVTLHTTHG…ETLRINRVTI (204 aa).

The protein belongs to the cyclophilin-type PPIase family. PPIL3 subfamily.

The catalysed reaction is [protein]-peptidylproline (omega=180) = [protein]-peptidylproline (omega=0). Functionally, PPIases accelerate the folding of proteins. It catalyzes the cis-trans isomerization of proline imidic peptide bonds in oligopeptides. The protein is Peptidyl-prolyl cis-trans isomerase-like 3 (cyp10) of Emericella nidulans (strain FGSC A4 / ATCC 38163 / CBS 112.46 / NRRL 194 / M139) (Aspergillus nidulans).